Here is a 418-residue protein sequence, read N- to C-terminus: 3-phosphoshikimate 1-carboxyvinyltransferase (418 aa).

3-phosphoshikimate is bound by residues Lys26, Ser27, and Arg31. Residue Lys26 coordinates phosphoenolpyruvate. Positions 97 and 125 each coordinate phosphoenolpyruvate. 3-phosphoshikimate is bound by residues Ser170, Ser171, Gln172, Asp297, Asn320, and Lys324. Gln172 lines the phosphoenolpyruvate pocket. The active-site Proton acceptor is Asp297. 3 residues coordinate phosphoenolpyruvate: Arg328, Arg375, and Lys400.

Belongs to the EPSP synthase family. In terms of assembly, monomer.

The protein resides in the cytoplasm. The enzyme catalyses 3-phosphoshikimate + phosphoenolpyruvate = 5-O-(1-carboxyvinyl)-3-phosphoshikimate + phosphate. It participates in metabolic intermediate biosynthesis; chorismate biosynthesis; chorismate from D-erythrose 4-phosphate and phosphoenolpyruvate: step 6/7. Its function is as follows. Catalyzes the transfer of the enolpyruvyl moiety of phosphoenolpyruvate (PEP) to the 5-hydroxyl of shikimate-3-phosphate (S3P) to produce enolpyruvyl shikimate-3-phosphate and inorganic phosphate. In Pseudomonas syringae pv. tomato (strain ATCC BAA-871 / DC3000), this protein is 3-phosphoshikimate 1-carboxyvinyltransferase.